Consider the following 223-residue polypeptide: MTQDEMKQAVARAAIEYVVPGEIIGVGTGSTANFFIDELGKIKDRIKGAVASSEATAQRLKSHGIAVFDLNEIDAMSVYIDGADEITAQGAMIKGGGAALTREKIVASVAKQFVCIADGSKLVDLLGNFPLPVEVIPMAQAVVARKLAALGGEPRLRLKDGKPLVTDNGCFIIDVLGLKIQDPAELEAQINNIVGVVTVGLFARRGADIALLGTAEGVKRLTF.

Substrate is bound by residues 28–31 (TGST), 81–84 (DGAD), and 94–97 (KGGG). The active-site Proton acceptor is E103. Residue K121 participates in substrate binding.

It belongs to the ribose 5-phosphate isomerase family. Homodimer.

The enzyme catalyses aldehydo-D-ribose 5-phosphate = D-ribulose 5-phosphate. The protein operates within carbohydrate degradation; pentose phosphate pathway; D-ribose 5-phosphate from D-ribulose 5-phosphate (non-oxidative stage): step 1/1. In terms of biological role, catalyzes the reversible conversion of ribose-5-phosphate to ribulose 5-phosphate. This Herminiimonas arsenicoxydans protein is Ribose-5-phosphate isomerase A.